The following is a 507-amino-acid chain: ATP synthase subunit alpha, chloroplastic (507 aa).

170 to 177 (GDRQTGKT) serves as a coordination point for ATP.

The protein belongs to the ATPase alpha/beta chains family. As to quaternary structure, F-type ATPases have 2 components, CF(1) - the catalytic core - and CF(0) - the membrane proton channel. CF(1) has five subunits: alpha(3), beta(3), gamma(1), delta(1), epsilon(1). CF(0) has four main subunits: a, b, b' and c.

It localises to the plastid. The protein localises to the chloroplast thylakoid membrane. The catalysed reaction is ATP + H2O + 4 H(+)(in) = ADP + phosphate + 5 H(+)(out). Functionally, produces ATP from ADP in the presence of a proton gradient across the membrane. The alpha chain is a regulatory subunit. The protein is ATP synthase subunit alpha, chloroplastic of Huperzia lucidula (Shining clubmoss).